The following is a 406-amino-acid chain: Eukaryotic initiation factor 4A-I (406 aa).

Residues 1–21 (MSASQDSRSRDNGPDGMEPEG) are disordered. Ser-2 carries the N-acetylserine modification. Ser-4 carries the phosphoserine modification. The short motif at 32–60 (DSFDDMNLSESLLRGIYAYGFEKPSAIQQ) is the Q motif element. The region spanning 63–234 (ILPCIKGYDV…KKFMRDPIRI (172 aa)) is the Helicase ATP-binding domain. 76–83 (AQSGTGKT) provides a ligand contact to ATP. Residue Lys-118 is modified to N6-acetyllysine. Lys-146 is covalently cross-linked (Glycyl lysine isopeptide (Lys-Gly) (interchain with G-Cter in SUMO2)). Residue Thr-158 is modified to Phosphothreonine. Position 174 is an N6-acetyllysine (Lys-174). The DEAD box motif lies at 182–185 (DEAD). Lys-193 is subject to N6-acetyllysine. Lys-225 is covalently cross-linked (Glycyl lysine isopeptide (Lys-Gly) (interchain with G-Cter in SUMO2)). An N6-acetyllysine; alternate modification is found at Lys-238. Lys-238 participates in a covalent cross-link: Glycyl lysine isopeptide (Lys-Gly) (interchain with G-Cter in SUMO2); alternate. In terms of domain architecture, Helicase C-terminal spans 245 to 406 (GIRQFYINVE…EMPLNVADLI (162 aa)). Glycyl lysine isopeptide (Lys-Gly) (interchain with G-Cter in SUMO2) cross-links involve residues Lys-309, Lys-369, and Lys-381.

This sequence belongs to the DEAD box helicase family. eIF4A subfamily. As to quaternary structure, eIF4F is a multi-subunit complex, the composition of which varies with external and internal environmental conditions. It is composed of at least EIF4A, EIF4E and EIF4G1/EIF4G3. Interacts with PAIP1, EIF4E and UPF2. Found in a complex with XPO7, EIF4A1, ARHGAP1, VPS26A, VPS29, VPS35 and SFN. May interact with NOM1. Interacts with PDCD4; this interferes with the interaction between EIF4A and EIF4G. Interacts with RBM4. Interacts with DDX3X in an RNA-independent manner. Interacts with PKP1 (via N-terminus); the interaction promotes EIF4A1 recruitment to the cap-dependent translation complex and EIF4A1 ATPase activity.

The protein localises to the cytoplasm. It is found in the perinuclear region. The protein resides in the cell membrane. Its subcellular location is the stress granule. It carries out the reaction ATP + H2O = ADP + phosphate + H(+). In terms of biological role, ATP-dependent RNA helicase which is a subunit of the eIF4F complex involved in cap recognition and is required for mRNA binding to ribosome. In the current model of translation initiation, eIF4A unwinds RNA secondary structures in the 5'-UTR of mRNAs which is necessary to allow efficient binding of the small ribosomal subunit, and subsequent scanning for the initiator codon. As a result, promotes cell proliferation and growth. The sequence is that of Eukaryotic initiation factor 4A-I (EIF4A1) from Bos taurus (Bovine).